A 31-amino-acid polypeptide reads, in one-letter code: Cytochrome b6-f complex subunit 6 (31 aa).

The helical transmembrane segment at 4-24 (ITSYFGFLLAALTITSALFIG) threads the bilayer.

Belongs to the PetL family. As to quaternary structure, the 4 large subunits of the cytochrome b6-f complex are cytochrome b6, subunit IV (17 kDa polypeptide, PetD), cytochrome f and the Rieske protein, while the 4 small subunits are PetG, PetL, PetM and PetN. The complex functions as a dimer.

The protein localises to the plastid. The protein resides in the chloroplast thylakoid membrane. In terms of biological role, component of the cytochrome b6-f complex, which mediates electron transfer between photosystem II (PSII) and photosystem I (PSI), cyclic electron flow around PSI, and state transitions. PetL is important for photoautotrophic growth as well as for electron transfer efficiency and stability of the cytochrome b6-f complex. The chain is Cytochrome b6-f complex subunit 6 from Citrus sinensis (Sweet orange).